A 273-amino-acid polypeptide reads, in one-letter code: Protein N-terminal and lysine N-methyltransferase EFM7 (273 aa).

The interval 1–32 is disordered; it reads MSDIEDLASGGLFDEPKDFYKPEEQPGSDSYA. Basic and acidic residues predominate over residues 14 to 24; that stretch reads DEPKDFYKPEE. Residues Trp-65, 92 to 94, Asp-114, Trp-161, and Ser-183 each bind S-adenosyl-L-methionine; that span reads GAG.

The protein belongs to the class I-like SAM-binding methyltransferase superfamily. EFM7 family.

Its subcellular location is the cytoplasm. S-adenosyl-L-methionine-dependent protein methyltransferase that trimethylates the N-terminal glycine 'Gly-2' of elongation factor 1-alpha, before also catalyzing the mono- and dimethylation of 'Lys-3'. The sequence is that of Protein N-terminal and lysine N-methyltransferase EFM7 from Yarrowia lipolytica (strain CLIB 122 / E 150) (Yeast).